The primary structure comprises 397 residues: Sporulation-specific protein 20 (397 aa).

Residues 1 to 26 form a disordered region; it reads MGFRKILASKSHHSRHHNQHHKNLKL. The inhibitory region stretch occupies residues 4–50; sequence RKILASKSHHSRHHNQHHKNLKLQNHRYVLISNITGSHETKYLSPFR. A compositionally biased stretch (basic residues) spans 10-26; the sequence is KSHHSRHHNQHHKNLKL. The interval 51–95 is positive regulatory region; it reads MDNCSGSRRRDRLHVKLKSLRNKIHKQLHPNCRFDDATKTSDDKC. The 63-residue stretch at 330-392 folds into the t-SNARE coiled-coil homology domain; that stretch reads NQMEIDLYGN…QAKRYRLEKV (63 aa).

Belongs to the SNAP-25 family. Interacts with the t-SNARE SSO1 and the v-SNARE SNC2.

Its subcellular location is the cell membrane. It is found in the prospore membrane. Functionally, required to maintain the prospore membrane to the nucleus during sporulation in order to capture the daughter nuclei and form the spores. Mediates the fusion of exocytic vesicles with the plasma membrane during sporulation through its interactions with the t-SNARE SSO1 and v-SNARE SNC2. This is Sporulation-specific protein 20 (SPO20) from Saccharomyces cerevisiae (strain ATCC 204508 / S288c) (Baker's yeast).